We begin with the raw amino-acid sequence, 66 residues long: Conotoxin TsMEKL-03 (66 aa).

The signal sequence occupies residues 1–9 (VILLMSTQA). Residues 10–38 (LIQSGVEKRSNKIKALSKRKTTAESWWEG) constitute a propeptide that is removed on maturation. 3 disulfides stabilise this stretch: C40–C54, C47–C58, and C53–C63.

This sequence belongs to the conotoxin O2 superfamily. Expressed by the venom duct.

Its subcellular location is the secreted. In Conus tessulatus (Tessellate cone), this protein is Conotoxin TsMEKL-03.